The following is a 100-amino-acid chain: Co-chaperonin GroES (100 aa).

It belongs to the GroES chaperonin family. Heptamer of 7 subunits arranged in a ring. Interacts with the chaperonin GroEL.

The protein resides in the cytoplasm. Its function is as follows. Together with the chaperonin GroEL, plays an essential role in assisting protein folding. The GroEL-GroES system forms a nano-cage that allows encapsulation of the non-native substrate proteins and provides a physical environment optimized to promote and accelerate protein folding. GroES binds to the apical surface of the GroEL ring, thereby capping the opening of the GroEL channel. The polypeptide is Co-chaperonin GroES (Mycolicibacterium smegmatis (strain ATCC 700084 / mc(2)155) (Mycobacterium smegmatis)).